A 288-amino-acid polypeptide reads, in one-letter code: Nucleotide-binding protein PM0169 (288 aa).

8-15 lines the ATP pocket; that stretch reads GHSGAGKS. 56-59 contributes to the GTP binding site; sequence DIRN.

The protein belongs to the RapZ-like family.

Its function is as follows. Displays ATPase and GTPase activities. This Pasteurella multocida (strain Pm70) protein is Nucleotide-binding protein PM0169.